A 359-amino-acid polypeptide reads, in one-letter code: Alanine racemase (359 aa).

Lys34 functions as the Proton acceptor; specific for D-alanine in the catalytic mechanism. Residue Lys34 is modified to N6-(pyridoxal phosphate)lysine. Arg129 contacts substrate. Tyr256 functions as the Proton acceptor; specific for L-alanine in the catalytic mechanism. Residue Met304 participates in substrate binding.

Belongs to the alanine racemase family. Requires pyridoxal 5'-phosphate as cofactor.

It catalyses the reaction L-alanine = D-alanine. It participates in amino-acid biosynthesis; D-alanine biosynthesis; D-alanine from L-alanine: step 1/1. Catalyzes the interconversion of L-alanine and D-alanine. May also act on other amino acids. In Photobacterium profundum (strain SS9), this protein is Alanine racemase (alr).